The following is a 77-amino-acid chain: U8-lycotoxin-Ls1m (77 aa).

Residues 1–20 (MKLMIFTGLFLFAIVSLIEA) form the signal peptide. A propeptide spanning residues 21–26 (QAENEK) is cleaved from the precursor.

It belongs to the neurotoxin 19 (CSTX) family. 08 (U8-Lctx) subfamily. Post-translationally, contains 4 disulfide bonds. As to expression, expressed by the venom gland.

It is found in the secreted. The polypeptide is U8-lycotoxin-Ls1m (Lycosa singoriensis (Wolf spider)).